A 954-amino-acid chain; its full sequence is Leucine--tRNA ligase (954 aa).

The 'HIGH' region signature appears at 67–78; sequence PYPSGAGLHVGH. Residues 729 to 733 carry the 'KMSKS' region motif; that stretch reads KMGKS. Lysine 732 serves as a coordination point for ATP.

The protein belongs to the class-I aminoacyl-tRNA synthetase family.

It is found in the cytoplasm. The catalysed reaction is tRNA(Leu) + L-leucine + ATP = L-leucyl-tRNA(Leu) + AMP + diphosphate. The protein is Leucine--tRNA ligase of Salinispora tropica (strain ATCC BAA-916 / DSM 44818 / JCM 13857 / NBRC 105044 / CNB-440).